We begin with the raw amino-acid sequence, 340 residues long: HTH-type transcriptional regulator PtxS (340 aa).

In terms of domain architecture, HTH lacI-type spans 12–67; sequence VTINQVAEAAGVSKASVSRYIGGDRQLLADATARRIERAIDQLDYRPNQMARGLKR. Positions 14-33 form a DNA-binding region, H-T-H motif; the sequence is INQVAEAAGVSKASVSRYIG.

Interacts with PtxR in the absence of 2-ketogluconate. Binding of the 2-ketogluconate effector to PtxS causes PtxS/PtxR complex dissociation.

With respect to regulation, 2-ketogluconate acts as a molecular effector and causes dissociation of the PtxS/PtxR complex. In terms of biological role, negatively regulates glucose metabolism by binding directly to the promoter region of the kgu and gad operons. It also negatively regulates its own synthesis. Functionally, in addition, in pathogenic strains, PtxS modulates PtxR activity in response to 2-ketogluconate. In the presence of PtxR, which also binds to the kgu and gad promoter regions, PtxS and PtxR form a tight complex, creating a DNA-loop that prevents RNA polymerase promoter access and expression of the glucose metabolism genes. Binding of the 2-ketogluconate effector to PtxS causes PtxS/PtxR complex dissociation and leads to the dissolution of the repression DNA-loop, facilitating the entry of the RNA polymerase and enabling the transcription of the genes. Also plays an important role in the regulation of the expression of the virulence factor exotoxin A (toxA). PtxS does not bind directly to the toxA promoter but negatively regulates the production of exotoxin A by binding to PtxR and interfering with its positive regulator activity. In the presence of 2-ketogluconate, PtxS is released and PtxR can recruit RNA polymerase. The polypeptide is HTH-type transcriptional regulator PtxS (Pseudomonas aeruginosa (strain ATCC 15692 / DSM 22644 / CIP 104116 / JCM 14847 / LMG 12228 / 1C / PRS 101 / PAO1)).